Reading from the N-terminus, the 225-residue chain is Cytochrome c oxidase subunit 2 (225 aa).

At M1 to N25 the chain is on the mitochondrial intermembrane side. The helical transmembrane segment at L26–M47 threads the bilayer. At N48 to E62 the chain is on the mitochondrial matrix side. A helical transmembrane segment spans residues I63 to K82. Topologically, residues I83–N225 are mitochondrial intermembrane. Cu cation contacts are provided by H159, C194, E196, C198, H202, and M205. E196 serves as a coordination point for Mg(2+).

The protein belongs to the cytochrome c oxidase subunit 2 family. In terms of assembly, component of the cytochrome c oxidase (complex IV, CIV), a multisubunit enzyme composed of a catalytic core of 3 subunits and several supernumerary subunits. The complex exists as a monomer or a dimer and forms supercomplexes (SCs) in the inner mitochondrial membrane with ubiquinol-cytochrome c oxidoreductase (cytochrome b-c1 complex, complex III, CIII). Cu cation serves as cofactor.

Its subcellular location is the mitochondrion inner membrane. The catalysed reaction is 4 Fe(II)-[cytochrome c] + O2 + 8 H(+)(in) = 4 Fe(III)-[cytochrome c] + 2 H2O + 4 H(+)(out). Functionally, component of the cytochrome c oxidase, the last enzyme in the mitochondrial electron transport chain which drives oxidative phosphorylation. The respiratory chain contains 3 multisubunit complexes succinate dehydrogenase (complex II, CII), ubiquinol-cytochrome c oxidoreductase (cytochrome b-c1 complex, complex III, CIII) and cytochrome c oxidase (complex IV, CIV), that cooperate to transfer electrons derived from NADH and succinate to molecular oxygen, creating an electrochemical gradient over the inner membrane that drives transmembrane transport and the ATP synthase. Cytochrome c oxidase is the component of the respiratory chain that catalyzes the reduction of oxygen to water. Electrons originating from reduced cytochrome c in the intermembrane space (IMS) are transferred via the dinuclear copper A center (CU(A)) of subunit 2 and heme A of subunit 1 to the active site in subunit 1, a binuclear center (BNC) formed by heme A3 and copper B (CU(B)). The BNC reduces molecular oxygen to 2 water molecules using 4 electrons from cytochrome c in the IMS and 4 protons from the mitochondrial matrix. This is Cytochrome c oxidase subunit 2 (COII) from Apis koschevnikovi (Koschevnikov's honey bee).